A 94-amino-acid chain; its full sequence is Selenoprotein K (94 aa).

Residues 20–42 (LSFITDFFWGIAEFVVFFFKTLL) form a helical membrane-spanning segment. Residues 48–94 (KRRGYGGSSDSRYDDGRGPPGNPPRRMGRISHLRGPSPPPMAGGUGR) are disordered. A non-standard amino acid (selenocysteine) is located at residue selenocysteine 92.

The protein belongs to the selenoprotein K family. In terms of assembly, interacts with DERL1, DERL2, DERL3 and SELENOS. The SELENOK-SELENOS complex interacts with VCP. Interacts with ZDHHC6. In terms of processing, cleaved by CAPN2/m-calpain in resting macrophages but not in activated macrophages. Macrophage activation up-regulates expression of the calpain inhibitor CAST/calpastatin, resulting in inhibition of CAPN2 activity. Truncated SELENOK proteins produced by failed UGA/Sec decoding are ubiquitinated by the CRL2(KLHDC2) complex, which recognizes the diglycine (Gly-Gly) at the C-terminus of truncated SELENOK proteins.

The protein localises to the endoplasmic reticulum membrane. The protein resides in the cell membrane. Required for Ca(2+) flux in immune cells and plays a role in T-cell proliferation and in T-cell and neutrophil migration. Involved in endoplasmic reticulum-associated degradation (ERAD) of soluble glycosylated proteins. Required for palmitoylation and cell surface expression of CD36 and involved in macrophage uptake of low-density lipoprotein and in foam cell formation. Together with ZDHHC6, required for palmitoylation of ITPR1 in immune cells, leading to regulate ITPR1 stability and function. Plays a role in protection of cells from ER stress-induced apoptosis. Protects cells from oxidative stress when overexpressed in cardiomyocytes. The chain is Selenoprotein K from Rattus norvegicus (Rat).